A 378-amino-acid chain; its full sequence is Cytochrome P450 2C15 (378 aa).

Cysteine 323 contributes to the heme binding site.

It belongs to the cytochrome P450 family. It depends on heme as a cofactor.

It localises to the endoplasmic reticulum membrane. The protein resides in the microsome membrane. The catalysed reaction is an organic molecule + reduced [NADPH--hemoprotein reductase] + O2 = an alcohol + oxidized [NADPH--hemoprotein reductase] + H2O + H(+). Functionally, cytochromes P450 are a group of heme-thiolate monooxygenases. In liver microsomes, this enzyme is involved in an NADPH-dependent electron transport pathway. It oxidizes a variety of structurally unrelated compounds, including steroids, fatty acids, and xenobiotics. This is Cytochrome P450 2C15 (CYP2C15) from Oryctolagus cuniculus (Rabbit).